We begin with the raw amino-acid sequence, 305 residues long: Translation initiation factor eIF2B subunit alpha (305 aa).

K35 is subject to N6-acetyllysine.

This sequence belongs to the eIF-2B alpha/beta/delta subunits family. As to quaternary structure, component of the translation initiation factor 2B (eIF2B) complex which is a heterodecamer of two sets of five different subunits: alpha, beta, gamma, delta and epsilon. Subunits alpha, beta and delta comprise a regulatory subcomplex and subunits epsilon and gamma comprise a catalytic subcomplex. Within the complex, the hexameric regulatory complex resides at the center, with the two heterodimeric catalytic subcomplexes bound on opposite sides.

It is found in the cytoplasm. Its subcellular location is the cytosol. With respect to regulation, activated by the chemical integrated stress response (ISR) inhibitor ISRIB which stimulates guanine nucleotide exchange factor activity for both phosphorylated and unphosphorylated eIF2. Functionally, acts as a component of the translation initiation factor 2B (eIF2B) complex, which catalyzes the exchange of GDP for GTP on eukaryotic initiation factor 2 (eIF2) gamma subunit. Its guanine nucleotide exchange factor activity is repressed when bound to eIF2 complex phosphorylated on the alpha subunit, thereby limiting the amount of methionyl-initiator methionine tRNA available to the ribosome and consequently global translation is repressed. This Pongo abelii (Sumatran orangutan) protein is Translation initiation factor eIF2B subunit alpha (EIF2B1).